The following is a 950-amino-acid chain: UvrABC system protein A (950 aa).

42–49 provides a ligand contact to ATP; sequence GLSGSGKS. A C4-type zinc finger spans residues 262–289; the sequence is CPVCSYSLPELEPRLFSFNNPMGSCPTC. ABC transporter domains follow at residues 319–596 and 616–945; these read WDKR…EKSV and VNPG…KYLK. ATP is bound at residue 649-656; that stretch reads GVSGSGKS. The C4-type zinc finger occupies 748-774; the sequence is CEACQGDGVIKVEMHFLPDVYVPCEVC.

This sequence belongs to the ABC transporter superfamily. UvrA family. As to quaternary structure, forms a heterotetramer with UvrB during the search for lesions.

Its subcellular location is the cytoplasm. Functionally, the UvrABC repair system catalyzes the recognition and processing of DNA lesions. UvrA is an ATPase and a DNA-binding protein. A damage recognition complex composed of 2 UvrA and 2 UvrB subunits scans DNA for abnormalities. When the presence of a lesion has been verified by UvrB, the UvrA molecules dissociate. This Neisseria gonorrhoeae protein is UvrABC system protein A.